Here is a 178-residue protein sequence, read N- to C-terminus: Sec-independent protein translocase protein TatB (178 aa).

Residues 1–21 (MFDIGWSELLVIGVVALIAIG) form a helical membrane-spanning segment. Residues 146 to 178 (LAIVREIKPEPQPQPADGAAPAEPERLKDAKAS) form a disordered region. A compositionally biased stretch (basic and acidic residues) spans 168–178 (EPERLKDAKAS).

It belongs to the TatB family. In terms of assembly, the Tat system comprises two distinct complexes: a TatABC complex, containing multiple copies of TatA, TatB and TatC subunits, and a separate TatA complex, containing only TatA subunits. Substrates initially bind to the TatABC complex, which probably triggers association of the separate TatA complex to form the active translocon.

It is found in the cell inner membrane. Its function is as follows. Part of the twin-arginine translocation (Tat) system that transports large folded proteins containing a characteristic twin-arginine motif in their signal peptide across membranes. Together with TatC, TatB is part of a receptor directly interacting with Tat signal peptides. TatB may form an oligomeric binding site that transiently accommodates folded Tat precursor proteins before their translocation. In Bradyrhizobium sp. (strain ORS 278), this protein is Sec-independent protein translocase protein TatB.